Consider the following 189-residue polypeptide: ATP synthase subunit b (189 aa).

Residues 7 to 27 (LLIAALAVAPLAHAAEGGFVG) form a helical membrane-spanning segment.

It belongs to the ATPase B chain family. F-type ATPases have 2 components, F(1) - the catalytic core - and F(0) - the membrane proton channel. F(1) has five subunits: alpha(3), beta(3), gamma(1), delta(1), epsilon(1). F(0) has three main subunits: a(1), b(2) and c(10-14). The alpha and beta chains form an alternating ring which encloses part of the gamma chain. F(1) is attached to F(0) by a central stalk formed by the gamma and epsilon chains, while a peripheral stalk is formed by the delta and b chains.

It localises to the cell inner membrane. F(1)F(0) ATP synthase produces ATP from ADP in the presence of a proton or sodium gradient. F-type ATPases consist of two structural domains, F(1) containing the extramembraneous catalytic core and F(0) containing the membrane proton channel, linked together by a central stalk and a peripheral stalk. During catalysis, ATP synthesis in the catalytic domain of F(1) is coupled via a rotary mechanism of the central stalk subunits to proton translocation. Its function is as follows. Component of the F(0) channel, it forms part of the peripheral stalk, linking F(1) to F(0). The protein is ATP synthase subunit b of Hyphomonas neptunium (strain ATCC 15444).